The following is a 312-amino-acid chain: Tyrosine recombinase XerC (312 aa).

Residues 10 to 101 (PDLQAARESW…GIRSLLRFLE (92 aa)) enclose the Core-binding (CB) domain. Positions 122–306 (SLPKPLTASD…DTARLLEIYE (185 aa)) constitute a Tyr recombinase domain. Active-site residues include Arg-165, Lys-190, His-258, Arg-261, and His-284. Tyr-293 serves as the catalytic O-(3'-phospho-DNA)-tyrosine intermediate.

This sequence belongs to the 'phage' integrase family. XerC subfamily. In terms of assembly, forms a cyclic heterotetrameric complex composed of two molecules of XerC and two molecules of XerD.

The protein localises to the cytoplasm. In terms of biological role, site-specific tyrosine recombinase, which acts by catalyzing the cutting and rejoining of the recombining DNA molecules. The XerC-XerD complex is essential to convert dimers of the bacterial chromosome into monomers to permit their segregation at cell division. It also contributes to the segregational stability of plasmids. The polypeptide is Tyrosine recombinase XerC (Mesorhizobium japonicum (strain LMG 29417 / CECT 9101 / MAFF 303099) (Mesorhizobium loti (strain MAFF 303099))).